Consider the following 303-residue polypeptide: ATP-dependent Clp protease ATP-binding subunit CLPT3, chloroplastic (303 aa).

The transit peptide at methionine 1 to alanine 37 directs the protein to the chloroplast. Disordered stretches follow at residues alanine 185–aspartate 214 and arginine 278–glutamate 303.

This sequence belongs to the ClpA/ClpB family.

The protein localises to the plastid. It localises to the chloroplast. Functionally, accessory protein regulating the assembly of the plastid Clp protease system. The sequence is that of ATP-dependent Clp protease ATP-binding subunit CLPT3, chloroplastic from Chlamydomonas reinhardtii (Chlamydomonas smithii).